A 236-amino-acid chain; its full sequence is 28 kDa antigen (236 aa).

An N-terminal signal peptide occupies residues 1 to 22 (MPNRRRCKLSTAISTVATLAIA). The interval 76-105 (PVPSLTGTDDPGNGLRTPGLTSPDLTNQEL) is disordered. Polar residues predominate over residues 94–105 (GLTSPDLTNQEL).

It to M.tuberculosis ERP.

In Mycobacterium leprae (strain TN), this protein is 28 kDa antigen.